The sequence spans 392 residues: Glycerophosphodiester phosphodiesterase GDPD5 (392 aa).

A signal peptide spans 1-21; that stretch reads MILTRCLPLIWLSLLTVCAAG. The GP-PDE domain occupies 44–362; that stretch reads PYNIAHRGSN…DFTGSLHNFQ (319 aa). N-linked (GlcNAc...) asparagine glycans are attached at residues asparagine 120, asparagine 239, asparagine 260, and asparagine 329.

It belongs to the glycerophosphoryl diester phosphodiesterase family. Expressed in roots, rosette and cauline leaves, stems, flowers and siliques.

It localises to the secreted. Its subcellular location is the cell wall. It is found in the vacuole. It carries out the reaction a sn-glycero-3-phosphodiester + H2O = an alcohol + sn-glycerol 3-phosphate + H(+). In Arabidopsis thaliana (Mouse-ear cress), this protein is Glycerophosphodiester phosphodiesterase GDPD5.